A 229-amino-acid polypeptide reads, in one-letter code: Peptidyl-tRNA hydrolase (229 aa).

Tyr-17 contacts tRNA. His-22 functions as the Proton acceptor in the catalytic mechanism. TRNA contacts are provided by Phe-74, Asn-76, and Asn-122. Residues Ala-194–Thr-229 form a disordered region. Residues Thr-207–Pro-223 are compositionally biased toward low complexity.

The protein belongs to the PTH family. In terms of assembly, monomer.

Its subcellular location is the cytoplasm. The enzyme catalyses an N-acyl-L-alpha-aminoacyl-tRNA + H2O = an N-acyl-L-amino acid + a tRNA + H(+). Hydrolyzes ribosome-free peptidyl-tRNAs (with 1 or more amino acids incorporated), which drop off the ribosome during protein synthesis, or as a result of ribosome stalling. Functionally, catalyzes the release of premature peptidyl moieties from peptidyl-tRNA molecules trapped in stalled 50S ribosomal subunits, and thus maintains levels of free tRNAs and 50S ribosomes. This Desulfovibrio desulfuricans (strain ATCC 27774 / DSM 6949 / MB) protein is Peptidyl-tRNA hydrolase.